Reading from the N-terminus, the 450-residue chain is Zinc metalloproteinase nas-13 (450 aa).

Positions 1–31 are cleaved as a signal peptide; sequence MPSPTSSSASVFSSHLFFVFCIFSQIAQSYA. The N-linked (GlcNAc...) asparagine glycan is linked to N68. A Peptidase M12A domain is found at 110 to 303; sequence NAVRQTYLKW…YKINMLYNCP (194 aa). Disulfide bonds link C152–C302 and C174–C193. Residue H201 participates in Zn(2+) binding. The active site involves E202. H205 and H211 together coordinate Zn(2+). N225 carries N-linked (GlcNAc...) asparagine glycosylation. Positions 349–351 match the Cell attachment site motif; that stretch reads RGD. Cystine bridges form between C368–C404, C375–C397, C384–C401, C414–C450, C421–C443, and C430–C447. ShKT domains follow at residues 368 to 404 and 414 to 450; these read CEDR…CGKC and CEDA…CNFC. N-linked (GlcNAc...) asparagine glycosylation occurs at N431.

Zn(2+) is required as a cofactor.

Its subcellular location is the secreted. Functionally, metalloprotease. This Caenorhabditis elegans protein is Zinc metalloproteinase nas-13 (nas-13).